The following is a 176-amino-acid chain: Mitochondrial inner membrane protein Mpv17 (176 aa).

4 helical membrane passes run 18-38, 57-77, 94-114, and 131-151; these read VQVL…QQLV, LGCG…DHLI, GGFA…LNGM, and LITN…LVPL.

The protein belongs to the peroxisomal membrane protein PXMP2/4 family.

The protein localises to the mitochondrion inner membrane. Non-selective channel that modulates the membrane potential under normal conditions and oxidative stress, and is involved in mitochondrial homeostasis. Involved in mitochondrial deoxynucleoside triphosphates (dNTP) pool homeostasis and mitochondrial DNA (mtDNA) maintenance. May be involved in the regulation of reactive oxygen species metabolism and the control of oxidative phosphorylation. The polypeptide is Mitochondrial inner membrane protein Mpv17 (Rattus norvegicus (Rat)).